Reading from the N-terminus, the 566-residue chain is MSSAGVALSPVRSEPLIMPLVRANSCLDSYPDDTIMIYLTLPGSVIPMRVLESDSIESVKLRIQSYRGFVVRNQKLVFGGRELARSNSNMRDYGVSEGNILHLVLKLSDLQVLDVKTTCGKHCRFHVERGRNIGYVKKQISKKRGDFVDPDEQEILYEGEKLEDQSLINDICRNDDSVLHLLVRRSAKVRVKPVEKNFELSIVAPQAKDKKGREAKSIVPPKKLSLEPVVVNSKAKVPLVVKDMIQSASDGLKSGNSPVRSSEGTGGAYFMQGPSGNKFVGVFKPIDEEPMAENNPQGLPLSPNGEGLKKGTKVGEGALREVAAYILDHPKSGNKSMFGEEIGFAGVPPTAMIECLHPGFNHPKGIKTKIGSLQMFTENDGSCEDMGPLSFPVEEVHKISVLDIRLANADRHGGNILMTKDESGKLVLVPIDHGYCLPESFEDCTFEWLYWPQARKPYSAETQEYIRSLDAEEDIDLLKFHGWKMPAETAQTLRISTMLLKKGVERGLTAFEIGTIMCRETLSKKSLVEEMVEEAQEAVLPGTSEAAFLEALSDVMDYHLDHSQEH.

2 Ubiquitin-like domains span residues 34-111 (TIMI…SDLQ) and 112-190 (VLDV…AKVR). A compositionally biased stretch (polar residues) spans 250–263 (DGLKSGNSPVRSSE). The tract at residues 250 to 272 (DGLKSGNSPVRSSEGTGGAYFMQ) is disordered. The 293-residue stretch at 255-547 (GNSPVRSSEG…AVLPGTSEAA (293 aa)) folds into the PI3K/PI4K catalytic domain. Positions 261 to 267 (SSEGTGG) are G-loop. ATP is bound by residues 262-268 (SEGTGGA), lysine 284, and 374-377 (QMFT). The tract at residues 407–415 (ANADRHGGN) is catalytic loop. Residues 430-456 (PIDHGYCLPESFEDCTFEWLYWPQARK) form an activation loop region. Aspartate 432 contributes to the ATP binding site.

The protein belongs to the PI3/PI4-kinase family. Type II PI4K subfamily. Interacts with RPN10, UFD1 and CDC48 in vitro. Post-translationally, autophosphorylated.

It is found in the membrane. The catalysed reaction is a 1,2-diacyl-sn-glycero-3-phospho-(1D-myo-inositol) + ATP = a 1,2-diacyl-sn-glycero-3-phospho-(1D-myo-inositol 4-phosphate) + ADP + H(+). The phosphorylation of phosphatidylinositol (PI) to PI4P is the first committed step in the generation of phosphatidylinositol 4,5-bisphosphate (PIP2), a precursor of the second messenger inositol 1,4,5-trisphosphate (InsP3). Undergoes autophosphorylation and phosphorylates serine/threonine residues of protein substrates. Phosphorylates RPN10 and UFD1 in vitro. In Arabidopsis thaliana (Mouse-ear cress), this protein is Phosphatidylinositol 4-kinase gamma 4.